Here is a 345-residue protein sequence, read N- to C-terminus: N-acetyl-gamma-glutamyl-phosphate reductase (345 aa).

Cys-149 is a catalytic residue.

The protein belongs to the NAGSA dehydrogenase family. Type 1 subfamily.

It localises to the cytoplasm. It catalyses the reaction N-acetyl-L-glutamate 5-semialdehyde + phosphate + NADP(+) = N-acetyl-L-glutamyl 5-phosphate + NADPH + H(+). Its pathway is amino-acid biosynthesis; L-arginine biosynthesis; N(2)-acetyl-L-ornithine from L-glutamate: step 3/4. In terms of biological role, catalyzes the NADPH-dependent reduction of N-acetyl-5-glutamyl phosphate to yield N-acetyl-L-glutamate 5-semialdehyde. This chain is N-acetyl-gamma-glutamyl-phosphate reductase, found in Geobacillus sp. (strain WCH70).